A 201-amino-acid polypeptide reads, in one-letter code: dTTP/UTP pyrophosphatase (201 aa).

The active-site Proton acceptor is the aspartate 75.

It belongs to the Maf family. YhdE subfamily. A divalent metal cation is required as a cofactor.

The protein resides in the cytoplasm. The catalysed reaction is dTTP + H2O = dTMP + diphosphate + H(+). The enzyme catalyses UTP + H2O = UMP + diphosphate + H(+). Its function is as follows. Nucleoside triphosphate pyrophosphatase that hydrolyzes dTTP and UTP. May have a dual role in cell division arrest and in preventing the incorporation of modified nucleotides into cellular nucleic acids. The protein is dTTP/UTP pyrophosphatase of Pseudomonas fluorescens (strain ATCC BAA-477 / NRRL B-23932 / Pf-5).